The chain runs to 401 residues: Glucose-6-phosphate isomerase (401 aa).

The Proton donor role is filled by Glu261. Active-site residues include His282 and Lys392.

It belongs to the GPI family. As to quaternary structure, homodimer.

The protein resides in the cytoplasm. It catalyses the reaction alpha-D-glucose 6-phosphate = beta-D-fructose 6-phosphate. It participates in carbohydrate biosynthesis; gluconeogenesis. The protein operates within carbohydrate degradation; glycolysis; D-glyceraldehyde 3-phosphate and glycerone phosphate from D-glucose: step 2/4. With respect to regulation, competively inhibited by 6-phosphogluconate and erythrose 4-phosphate. Catalyzes the isomerization of glucose-6-P to fructose-6-P. In Methanocaldococcus jannaschii (strain ATCC 43067 / DSM 2661 / JAL-1 / JCM 10045 / NBRC 100440) (Methanococcus jannaschii), this protein is Glucose-6-phosphate isomerase.